The chain runs to 907 residues: Interference hedgehog (907 aa).

The first 23 residues, 1–23 (MSLTRRFSLTLLLLLPLLTSLLA), serve as a signal peptide directing secretion. The Extracellular portion of the chain corresponds to 24–709 (AIPVLQANLS…SHNETFNMNP (686 aa)). Ig-like C2-type domains lie at 42 to 149 (PGVR…ASIS), 152 to 233 (GADT…VRLA), 252 to 340 (PALL…FIEL), and 346 to 433 (PRIL…LQVN). Disulfide bonds link Cys-65-Cys-127, Cys-173-Cys-221, and Cys-276-Cys-324. N-linked (GlcNAc...) asparagine glycans are attached at residues Asn-101, Asn-203, Asn-300, and Asn-355. A disulfide bond links Cys-367 and Cys-415. Positions 427–474 (GTLLQVNPKQLPDGEGTGMDSGRSSARPTHSRKQKQQTQMVPPSAPNV) are disordered. Positions 462-474 (QQTQMVPPSAPNV) are enriched in polar residues. Fibronectin type-III domains are found at residues 468–578 (PPSA…LQRG) and 586–681 (VPEL…TQRP). Residue Asn-473 is glycosylated (N-linked (GlcNAc...) asparagine). Heparin is bound by residues Arg-504, Lys-511, and Lys-513. N-linked (GlcNAc...) asparagine glycans are attached at residues Asn-537 and Asn-548. Heparin is bound at residue Arg-552. Asn-568 carries N-linked (GlcNAc...) asparagine glycosylation. Polar residues predominate over residues 676–688 (GRTQRPRASSTPQ). The tract at residues 676–701 (GRTQRPRASSTPQPVLHAVDTTTPSH) is disordered. An N-linked (GlcNAc...) asparagine glycan is attached at Asn-702. The helical transmembrane segment at 710–730 (MLTGTIGGGALLVLLVISACL) threads the bilayer. Residues 731–907 (CLCRRRSSRG…SSGSLNSVGV (177 aa)) are Cytoplasmic-facing. 2 disordered regions span residues 780 to 805 (AQQQ…QDND) and 829 to 881 (MSSS…NKPG). Low complexity-rich tracts occupy residues 781–794 (QQQQ…LQQQ) and 853–863 (NNNNLNQPGDG). Residues 865–878 (LANSADSPRLQASN) show a composition bias toward polar residues.

This sequence belongs to the immunoglobulin superfamily. IHOG family. In terms of assembly, homodimer. Heterotetramer; 2 iHog chains bind 2 hh chains when facilitated by heparin, heparin is required to promote high-affinity interactions between hh and iHog.

The protein localises to the membrane. In terms of biological role, mediates response to the active Hedgehog (Hh) protein signal in embryos, functioning upstream or at the level of patched (ptc). In Drosophila virilis (Fruit fly), this protein is Interference hedgehog.